A 30-amino-acid polypeptide reads, in one-letter code: Protamine-YII (30 aa).

The interval 1 to 30 (PRRRTRRASRPVRRRRPRRVSRRRRARRRR) is disordered.

In terms of tissue distribution, testis.

Its subcellular location is the nucleus. The protein resides in the chromosome. In terms of biological role, protamines substitute for histones in the chromatin of sperm during the haploid phase of spermatogenesis. They compact sperm DNA into a highly condensed, stable and inactive complex. This is Protamine-YII from Clupea harengus (Atlantic herring).